The primary structure comprises 233 residues: MSSSSSMECTGNMSAAPLLVLTVAVLAVLASTCAADPEPIQDFCVAVPRAGGEASPAYPGFPCKPASAVVSDDFFFAGLAAAGSTDNPFGASLKPGNVEAFPALNTLGVAINRVDLAPGGVNPLHSHPRAAELVHVITGRMLVGFVSTAGKYYSKVVGEGETFAIPRGLMHFQYNPGNASARAMTVFNSQLPGVVPAATALFGADPEIPDAVLAKSFQVDAEIIKLLKSKFKK.

The signal sequence occupies residues 1–35; it reads MSSSSSMECTGNMSAAPLLVLTVAVLAVLASTCAA. Cys-44 and Cys-63 form a disulfide bridge. The region spanning 77–225 is the Cupin type-1 domain; that stretch reads AGLAAAGSTD…SFQVDAEIIK (149 aa). His-125, His-127, Glu-132, and His-171 together coordinate Mn(2+). The N-linked (GlcNAc...) asparagine glycan is linked to Asn-178.

Belongs to the germin family. Oligomer (believed to be a pentamer but probably hexamer).

The protein localises to the secreted. Its subcellular location is the extracellular space. It is found in the apoplast. Its function is as follows. May play a role in plant defense. Probably has no oxalate oxidase activity even if the active site is conserved. The sequence is that of Germin-like protein 3-7 (GER7) from Oryza sativa subsp. japonica (Rice).